The following is a 293-amino-acid chain: 4-diphosphocytidyl-2-C-methyl-D-erythritol kinase (293 aa).

Lys10 is an active-site residue. ATP is bound at residue 94-104; that stretch reads PVSAGLAGGSS. Asp136 is a catalytic residue.

It belongs to the GHMP kinase family. IspE subfamily.

It catalyses the reaction 4-CDP-2-C-methyl-D-erythritol + ATP = 4-CDP-2-C-methyl-D-erythritol 2-phosphate + ADP + H(+). It functions in the pathway isoprenoid biosynthesis; isopentenyl diphosphate biosynthesis via DXP pathway; isopentenyl diphosphate from 1-deoxy-D-xylulose 5-phosphate: step 3/6. Functionally, catalyzes the phosphorylation of the position 2 hydroxy group of 4-diphosphocytidyl-2C-methyl-D-erythritol. The protein is 4-diphosphocytidyl-2-C-methyl-D-erythritol kinase of Listeria monocytogenes serovar 1/2a (strain ATCC BAA-679 / EGD-e).